Consider the following 149-residue polypeptide: Cytochrome c-type biogenesis protein CcmE (149 aa).

The Cytoplasmic segment spans residues 1–7; it reads MKKRHQR. The chain crosses the membrane as a helical; Signal-anchor for type II membrane protein span at residues 8–28; it reads LFLVLGVVAGVSVATALVLNA. Residues 29-149 lie on the Periplasmic side of the membrane; sequence FRDNMTFFIT…EHSVDEVGDY (121 aa). Residues histidine 123 and tyrosine 127 each coordinate heme.

This sequence belongs to the CcmE/CycJ family.

It localises to the cell inner membrane. Functionally, heme chaperone required for the biogenesis of c-type cytochromes. Transiently binds heme delivered by CcmC and transfers the heme to apo-cytochromes in a process facilitated by CcmF and CcmH. This chain is Cytochrome c-type biogenesis protein CcmE, found in Halorhodospira halophila (strain DSM 244 / SL1) (Ectothiorhodospira halophila (strain DSM 244 / SL1)).